Consider the following 673-residue polypeptide: Ion-translocating oxidoreductase complex subunit C (673 aa).

4Fe-4S ferredoxin-type domains lie at Met-368–Tyr-397 and Lys-407–Phe-436. [4Fe-4S] cluster-binding residues include Cys-377, Cys-380, Cys-383, Cys-387, Cys-416, Cys-419, Cys-422, and Cys-426. Disordered stretches follow at residues Gln-534–Ala-553 and Ile-563–Ala-653.

The protein belongs to the 4Fe4S bacterial-type ferredoxin family. RnfC subfamily. The complex is composed of six subunits: RsxA, RsxB, RsxC, RsxD, RsxE and RsxG. The cofactor is [4Fe-4S] cluster.

The protein resides in the cell inner membrane. Its function is as follows. Part of a membrane-bound complex that couples electron transfer with translocation of ions across the membrane. Required to maintain the reduced state of SoxR. The polypeptide is Ion-translocating oxidoreductase complex subunit C (Salmonella gallinarum (strain 287/91 / NCTC 13346)).